Consider the following 1395-residue polypeptide: DNA-directed RNA polymerase subunit beta' (1395 aa).

The Zn(2+) site is built by Cys-70, Cys-72, Cys-85, and Cys-88. Mg(2+) is bound by residues Asp-460, Asp-462, and Asp-464. Zn(2+) is bound by residues Cys-814, Cys-888, Cys-895, and Cys-898.

The protein belongs to the RNA polymerase beta' chain family. The RNAP catalytic core consists of 2 alpha, 1 beta, 1 beta' and 1 omega subunit. When a sigma factor is associated with the core the holoenzyme is formed, which can initiate transcription. It depends on Mg(2+) as a cofactor. The cofactor is Zn(2+).

It catalyses the reaction RNA(n) + a ribonucleoside 5'-triphosphate = RNA(n+1) + diphosphate. DNA-dependent RNA polymerase catalyzes the transcription of DNA into RNA using the four ribonucleoside triphosphates as substrates. The protein is DNA-directed RNA polymerase subunit beta' of Pseudoalteromonas atlantica (strain T6c / ATCC BAA-1087).